A 361-amino-acid polypeptide reads, in one-letter code: Peptide chain release factor 1 (361 aa).

Residue Gln-233 is modified to N5-methylglutamine. The interval 282-310 is disordered; that stretch reads SKKQAERAQNRKSQVGSGDRSERIRTYNF.

Belongs to the prokaryotic/mitochondrial release factor family. Methylated by PrmC. Methylation increases the termination efficiency of RF1.

Its subcellular location is the cytoplasm. In terms of biological role, peptide chain release factor 1 directs the termination of translation in response to the peptide chain termination codons UAG and UAA. This chain is Peptide chain release factor 1, found in Treponema denticola (strain ATCC 35405 / DSM 14222 / CIP 103919 / JCM 8153 / KCTC 15104).